A 264-amino-acid chain; its full sequence is H-2 class II histocompatibility antigen, I-E beta chain (264 aa).

A signal peptide spans 1-31; the sequence is MVWLPRVPCVAAVILLLTVLSPPVALVRNSR. Residues 32–121 form a beta-1 region; that stretch reads PRFLEYSTSE…IFDNFLVPRR (90 aa). Residues 32–225 are Extracellular-facing; sequence PRFLEYSTSE…KAQSTSAQNK (194 aa). Intrachain disulfides connect Cys-42-Cys-106 and Cys-144-Cys-200. Residue Asn-46 is glycosylated (N-linked (GlcNAc...) asparagine). The tract at residues 122–215 is beta-2; it reads VEPTVTVYPT…SLTDPVTVEW (94 aa). The Ig-like C1-type domain maps to 124 to 214; it reads PTVTVYPTKT…PSLTDPVTVE (91 aa). Positions 216 to 225 are connecting peptide; that stretch reads KAQSTSAQNK. Residues 226-248 traverse the membrane as a helical segment; the sequence is MLSGVGGFVLGLLFLGAGLFIYF. At 249–264 the chain is on the cytoplasmic side; the sequence is RNQKGQSGLQPTGLLS.

This sequence belongs to the MHC class II family. In terms of processing, ubiquitinated in immature dendritic cells leading to down-regulation of MHC class II.

The protein resides in the membrane. This chain is H-2 class II histocompatibility antigen, I-E beta chain (H2-Eb1), found in Mus musculus (Mouse).